The sequence spans 338 residues: Biotin synthase (338 aa).

The region spanning 45 to 272 (DEVQMSTLLS…QSVVRLSAGR (228 aa)) is the Radical SAM core domain. [4Fe-4S] cluster-binding residues include cysteine 60, cysteine 64, and cysteine 67. [2Fe-2S] cluster contacts are provided by cysteine 104, cysteine 135, cysteine 195, and arginine 267.

It belongs to the radical SAM superfamily. Biotin synthase family. In terms of assembly, homodimer. [4Fe-4S] cluster is required as a cofactor. It depends on [2Fe-2S] cluster as a cofactor.

It catalyses the reaction (4R,5S)-dethiobiotin + (sulfur carrier)-SH + 2 reduced [2Fe-2S]-[ferredoxin] + 2 S-adenosyl-L-methionine = (sulfur carrier)-H + biotin + 2 5'-deoxyadenosine + 2 L-methionine + 2 oxidized [2Fe-2S]-[ferredoxin]. It functions in the pathway cofactor biosynthesis; biotin biosynthesis; biotin from 7,8-diaminononanoate: step 2/2. In terms of biological role, catalyzes the conversion of dethiobiotin (DTB) to biotin by the insertion of a sulfur atom into dethiobiotin via a radical-based mechanism. The protein is Biotin synthase of Parvibaculum lavamentivorans (strain DS-1 / DSM 13023 / NCIMB 13966).